The chain runs to 307 residues: Probable 2-methylisocitrate lyase 2 (307 aa).

53–55 serves as a coordination point for substrate; it reads SGA. Residues Asp92 and Asp94 each coordinate Mg(2+). Substrate is bound by residues 129–130, Arg164, Glu194, 216–218, Arg247, and Arg276; these read CG and NMT.

The protein belongs to the isocitrate lyase/PEP mutase superfamily. Methylisocitrate lyase family. Homotetramer; dimer of dimers. Mg(2+) is required as a cofactor.

The catalysed reaction is (2S,3R)-3-hydroxybutane-1,2,3-tricarboxylate = pyruvate + succinate. Its pathway is organic acid metabolism; propanoate degradation. Functionally, involved in the catabolism of short chain fatty acids (SCFA) via the 2-methylcitrate cycle I (propionate degradation route). Catalyzes the thermodynamically favored C-C bond cleavage of (2R,3S)-2-methylisocitrate to yield pyruvate and succinate via an alpha-carboxy-carbanion intermediate. The polypeptide is Probable 2-methylisocitrate lyase 2 (Corynebacterium glutamicum (strain ATCC 13032 / DSM 20300 / JCM 1318 / BCRC 11384 / CCUG 27702 / LMG 3730 / NBRC 12168 / NCIMB 10025 / NRRL B-2784 / 534)).